A 496-amino-acid chain; its full sequence is Transmembrane transporter swnT (496 aa).

The next 5 membrane-spanning stretches (helical) occupy residues 40 to 60 (LSAI…PLIL), 72 to 92 (VFWG…TLAE), 124 to 144 (AMIS…SVPL), 162 to 182 (WMGF…ACFE), and 191 to 211 (AFLL…FAMA). N-linked (GlcNAc...) asparagine glycosylation occurs at Asn-225. Transmembrane regions (helical) follow at residues 270–290 (LLWT…AVLV), 314–334 (AAAI…VWSI), 368–388 (PIWS…LYLA), 396–416 (LIAT…VLVL), 434–454 (GLVA…FYCF), and 467–487 (YVSG…ILYA).

It belongs to the amino acid-polyamine-organocation (APC) superfamily. Amino acid/choline transporter (ACT) (TC 2.A.3.4) family.

Its subcellular location is the membrane. Functionally, transmembrane transporter; part of the gene cluster that mediates the biosynthesis of swainsonine, a cytotoxic fungal alkaloid and a potential cancer therapy drug. Does not mediate the secretion of SW and the exact role of swnT in SW biosynthesis remains to be determined. This chain is Transmembrane transporter swnT, found in Metarhizium robertsii (strain ARSEF 23 / ATCC MYA-3075) (Metarhizium anisopliae (strain ARSEF 23)).